Consider the following 180-residue polypeptide: MDNSLHATTIYAVRHNGEAAMAGDGQVTLGQQVIMKQTARKVRRLYEGKVLAGFAGSVADAFTLFEKFETKLQQFSGNLERAAVELAQEWRGDKQLRQLEAMLIVMNKDAILIVSGTGEVIAPDDDLIAIGSGGNYALSAGRALKRHAAQLSASEMAYESLKVAADICVFTNDNIIVETL.

Thr-8 is an active-site residue. Residues Ala-165, Cys-168, and Thr-171 each contribute to the Na(+) site.

This sequence belongs to the peptidase T1B family. HslV subfamily. As to quaternary structure, a double ring-shaped homohexamer of HslV is capped on each side by a ring-shaped HslU homohexamer. The assembly of the HslU/HslV complex is dependent on binding of ATP.

The protein localises to the cytoplasm. The enzyme catalyses ATP-dependent cleavage of peptide bonds with broad specificity.. Allosterically activated by HslU binding. Its function is as follows. Protease subunit of a proteasome-like degradation complex believed to be a general protein degrading machinery. This is ATP-dependent protease subunit HslV from Staphylococcus epidermidis (strain ATCC 12228 / FDA PCI 1200).